We begin with the raw amino-acid sequence, 564 residues long: Dicarboxylate transporter 2, chloroplastic (564 aa).

A chloroplast-targeting transit peptide spans 1–22; the sequence is MESLALLPTLSLSTTTTTSKAT. The disordered stretch occupies residues 35–58; it reads RRPHLSLSLSSTPKPTLTFSSHSH. A compositionally biased stretch (low complexity) spans 39 to 58; sequence LSLSLSSTPKPTLTFSSHSH. Transmembrane regions (helical) follow at residues 94-114, 127-147, 166-186, 235-255, 262-282, 307-327, 356-376, 380-400, 415-435, 451-471, 484-504, and 538-558; these read GAKL…RFAV, LLAI…PVGA, TAFC…FFFA, AGGI…SLPG, LGTY…ALFL, VFWL…TPLI, VTKN…LWVF, IGVS…LLGV, TLAW…LGIV, LSWP…HYLF, AFLA…LALA, and MGFI…GVWW.

This sequence belongs to the SLC13A/DASS transporter (TC 2.A.47) family. DIT1 subfamily. Expressed in leaves.

It is found in the plastid. The protein localises to the chloroplast inner membrane. Glutamate/malate translocator involved with DIT1 in primary ammonia assimilation and in the re-assimilation of ammonia generated by the photorespiratory pathway. Exports the end product of ammonia assimilation, glutamate, from plastids to the cytosol. The precursor for ammonia assimilation, 2-oxoglutarate, is imported from the cytosol by DIT1. This Spinacia oleracea (Spinach) protein is Dicarboxylate transporter 2, chloroplastic (DIT2).